The chain runs to 96 residues: Myoglobin (96 aa).

The Globin domain occupies 1–96; sequence GLSDGEWQLV…AKTKELGFLG (96 aa). At Ser-3 the chain carries Phosphoserine. His-61 contributes to the nitrite binding site. O2 is bound at residue His-61. Thr-64 is subject to Phosphothreonine.

It belongs to the globin family. As to quaternary structure, monomeric.

The protein resides in the cytoplasm. The protein localises to the sarcoplasm. It carries out the reaction Fe(III)-heme b-[protein] + nitric oxide + H2O = Fe(II)-heme b-[protein] + nitrite + 2 H(+). It catalyses the reaction H2O2 + AH2 = A + 2 H2O. In terms of biological role, monomeric heme protein which primary function is to store oxygen and facilitate its diffusion within muscle tissues. Reversibly binds oxygen through a pentacoordinated heme iron and enables its timely and efficient release as needed during periods of heightened demand. Depending on the oxidative conditions of tissues and cells, and in addition to its ability to bind oxygen, it also has a nitrite reductase activity whereby it regulates the production of bioactive nitric oxide. Under stress conditions, like hypoxia and anoxia, it also protects cells against reactive oxygen species thanks to its pseudoperoxidase activity. This is Myoglobin (MB) from Ailuropoda melanoleuca (Giant panda).